The following is a 335-amino-acid chain: Nod factor export ATP-binding protein I (335 aa).

The ABC transporter domain occupies 37–267 (IDVASVTKSY…KIGCQVIEIY (231 aa)). Position 69–76 (69–76 (GPNGAGKS)) interacts with ATP.

It belongs to the ABC transporter superfamily. Lipooligosaccharide exporter (TC 3.A.1.102) family. In terms of assembly, the complex is composed of two ATP-binding proteins (NodI) and two transmembrane proteins (NodJ).

The protein resides in the cell inner membrane. Part of the ABC transporter complex NodIJ involved in the export of the nodulation factors (Nod factors), the bacterial signal molecules that induce symbiosis and subsequent nodulation induction. Nod factors are LCO (lipo-chitin oligosaccharide), a modified beta-1,4-linked N-acetylglucosamine oligosaccharide. This subunit is responsible for energy coupling to the transport system. This chain is Nod factor export ATP-binding protein I, found in Rhizobium meliloti (strain 1021) (Ensifer meliloti).